Here is a 211-residue protein sequence, read N- to C-terminus: MRQQQQQQQESRFKRTCVFCGSSQGNKTTYRDAAVDLAKELVARGIDLVYGGGSIGLMGLVSQAVYDGGRHVIGVIPKTLMTPEIIGETVGEVRPVSDMHQRKAEMARQSDAFIALPGGYGTLEELLEVITWAQLGIHHKPVGLLNVDGYYNSLLTFIDQAVEEGFISPSARRIIVSAPTAQELMDKLEEYVPYHDRVASGLNWETGHLGF.

Substrate-binding positions include Glu84, 102–103 (RK), 119–125 (GYGTLEE), and Thr131.

Belongs to the LOG family. As to expression, expressed in roots, leaves, stems, tiller buds, shoot apex, immature inflorescences and flowers.

The enzyme catalyses N(6)-(dimethylallyl)adenosine 5'-phosphate + H2O = N(6)-dimethylallyladenine + D-ribose 5-phosphate. The catalysed reaction is 9-ribosyl-trans-zeatin 5'-phosphate + H2O = trans-zeatin + D-ribose 5-phosphate. Functionally, cytokinin-activating enzyme working in the direct activation pathway. Phosphoribohydrolase that converts inactive cytokinin nucleotides to the biologically active free-base forms. This chain is Probable cytokinin riboside 5'-monophosphate phosphoribohydrolase LOGL3 (LOGL3), found in Oryza sativa subsp. japonica (Rice).